A 127-amino-acid polypeptide reads, in one-letter code: uncharacterized protein (127 aa).

The next 2 membrane-spanning stretches (helical) occupy residues 64 to 84 (GYYITNLICIVVGLFLYFGYL) and 101 to 118 (FFHFFFTILAVTSRAIYY).

It is found in the membrane. This is an uncharacterized protein from Saccharomyces cerevisiae (strain ATCC 204508 / S288c) (Baker's yeast).